The primary structure comprises 437 residues: MDHVSLSLWSAPRAQAPVDAVVTLPGSKSITNRALILAALADGPSTITGALRSRDADLMIAALRDLGIGVEEAGDPTTLRITPGPLRGGEVDCGLAGTVMRFLPPLAAMADGIVRFDGDEQARTRPLGTILEALRGLGARIEGDALPFTVTGTGSLRGGTVTIDASGSSQFVSGLLLSAAAFEEGVTVHHDGKPVPSMPHIDMTVEMLRQSGVSVTTPATGGDADTWRVAPGPVRAVDWAIEPDLSNATPFLAAAAVTGGTVSVPMWPSSTTQPGDAIRGILASMGADVTLADGVLTVRGPEKLRGIDIDLHDVGELTPTVAALAALAEGTSHLRGIAHLRGHETDRLAALADEINKLGGSVTETDDGLTIVPAELHGGQWLSYADHRMATAGAIIGLVVDGVDVDDVGTTAKTLPGFENMWIDMLESSPATPKASF.

3-phosphoshikimate-binding residues include Lys-28, Ser-29, and Arg-33. Lys-28 lines the phosphoenolpyruvate pocket. Residues Gly-97 and Arg-125 each contribute to the phosphoenolpyruvate site. Residues Ser-168, Ser-169, Gln-170, Glu-316, and His-343 each coordinate 3-phosphoshikimate. Phosphoenolpyruvate is bound at residue Gln-170. The active-site Proton acceptor is the Glu-316. The phosphoenolpyruvate site is built by Arg-347, Arg-388, and Lys-413.

The protein belongs to the EPSP synthase family. In terms of assembly, monomer.

It is found in the cytoplasm. The enzyme catalyses 3-phosphoshikimate + phosphoenolpyruvate = 5-O-(1-carboxyvinyl)-3-phosphoshikimate + phosphate. Its pathway is metabolic intermediate biosynthesis; chorismate biosynthesis; chorismate from D-erythrose 4-phosphate and phosphoenolpyruvate: step 6/7. Its function is as follows. Catalyzes the transfer of the enolpyruvyl moiety of phosphoenolpyruvate (PEP) to the 5-hydroxyl of shikimate-3-phosphate (S3P) to produce enolpyruvyl shikimate-3-phosphate and inorganic phosphate. The polypeptide is 3-phosphoshikimate 1-carboxyvinyltransferase (Rhodococcus erythropolis (strain PR4 / NBRC 100887)).